The primary structure comprises 114 residues: Transcription initiation factor IIB (114 aa).

A run of 2 repeats spans residues Val-1–Leu-17 and Gln-28–Glu-109.

It belongs to the TFIIB family.

Functionally, stabilizes TBP binding to an archaeal box-A promoter. Also responsible for recruiting RNA polymerase II to the pre-initiation complex (DNA-TBP-TFIIB). This chain is Transcription initiation factor IIB (tfb), found in Haloarcula vallismortis (Halobacterium vallismortis).